The chain runs to 390 residues: Alanine racemase (390 aa).

Lys-37 (proton acceptor; specific for D-alanine) is an active-site residue. The residue at position 37 (Lys-37) is an N6-(pyridoxal phosphate)lysine. Arg-135 contacts substrate. The Proton acceptor; specific for L-alanine role is filled by Tyr-274. Met-322 is a binding site for substrate.

This sequence belongs to the alanine racemase family. The cofactor is pyridoxal 5'-phosphate.

It carries out the reaction L-alanine = D-alanine. It participates in amino-acid biosynthesis; D-alanine biosynthesis; D-alanine from L-alanine: step 1/1. In terms of biological role, catalyzes the interconversion of L-alanine and D-alanine. May also act on other amino acids. This is Alanine racemase (alr) from Desulfosudis oleivorans (strain DSM 6200 / JCM 39069 / Hxd3) (Desulfococcus oleovorans).